The sequence spans 343 residues: Annexin A1 isoform p37 (343 aa).

Gln19 is covalently cross-linked (Isoglutamyl lysine isopeptide (Gln-Lys) (interchain with K-?)). A Phosphotyrosine; by EGFR; in vitro modification is found at Tyr21. Ser24 bears the Phosphoserine; by PKC; in vitro mark. Annexin repeat units lie at residues 38–109 (FDPS…ALLK), 110–181 (TPAQ…VLAK), 193–265 (DLAD…ALVK), and 269–340 (SKPA…ALCG).

It belongs to the annexin family. Phosphorylated by protein kinase C and epidermal growth factor receptor/kinase. Post-translationally, the N-terminus is blocked.

It is found in the nucleus. It localises to the cytoplasm. The protein resides in the cell projection. The protein localises to the cilium. Its subcellular location is the basolateral cell membrane. Calcium/phospholipid-binding protein which promotes membrane fusion and is involved in exocytosis. This protein regulates phospholipase A2 activity. It seems to bind from two to four calcium ions with high affinity. This chain is Annexin A1 isoform p37 (CP37), found in Columba livia (Rock dove).